Consider the following 444-residue polypeptide: Exodeoxyribonuclease 7 large subunit (444 aa).

It belongs to the XseA family. In terms of assembly, heterooligomer composed of large and small subunits.

Its subcellular location is the cytoplasm. It carries out the reaction Exonucleolytic cleavage in either 5'- to 3'- or 3'- to 5'-direction to yield nucleoside 5'-phosphates.. Bidirectionally degrades single-stranded DNA into large acid-insoluble oligonucleotides, which are then degraded further into small acid-soluble oligonucleotides. In Pseudoalteromonas atlantica (strain T6c / ATCC BAA-1087), this protein is Exodeoxyribonuclease 7 large subunit.